The sequence spans 1347 residues: Protocadherin-11 X-linked (1347 aa).

Positions 1–23 (MDLLSGTYIFAVLLACVVFHSGA) are cleaved as a signal peptide. Topologically, residues 24 to 812 (QEKNYTIREE…VSSPTSDYVK (789 aa)) are extracellular. 7 Cadherin domains span residues 26-139 (KNYT…APLF), 140-249 (PATV…HPVF), 250-355 (KETE…VPSI), 362-466 (NPVN…APVF), 467-570 (TQSF…SPVF), 571-673 (THNE…KPVF), and 677-795 (PSNY…APVT). N-linked (GlcNAc...) asparagine glycosylation is found at asparagine 27, asparagine 48, and asparagine 54. N-linked (GlcNAc...) asparagine glycosylation is present at asparagine 344. Asparagine 553 is a glycosylation site (N-linked (GlcNAc...) asparagine). An N-linked (GlcNAc...) asparagine glycan is attached at asparagine 773. Residues 813–833 (ILVAAVAGTITVVVVIFITAV) form a helical membrane-spanning segment. Topologically, residues 834-1347 (VRCRQAPHLK…DSPVMEEHPL (514 aa)) are cytoplasmic. 3 disordered regions span residues 1057–1091 (LPEG…GYPQ), 1097–1116 (RATP…ESTF), and 1325–1347 (TFTP…EHPL).

The protein localises to the cell membrane. In terms of biological role, potential calcium-dependent cell-adhesion protein. This is Protocadherin-11 X-linked (PCDH11X) from Pan troglodytes (Chimpanzee).